Here is a 544-residue protein sequence, read N- to C-terminus: MKLNDIKRLYKIVRVFLSYGIDEILPHNKYTRSIRCWRMLFFWLKNKHKNKAFGLCLRLALQELGPVWIKLGQMLSTRRDLFPAEIADELALLQDNVEAFSGKIARQQIEQALGSSLENWFTDFDENALASASIAQVHTAKLKLGEEQEKEVVIKVLRPNIQPQIEADLSWMYKLAGLLPKLFREGYRLRAVEVIQEYEKTLRDELDLRVEMANAIKLRENFLDSPMLYIPKMYEAFCHKNVIVMERIYGIPVSDVETLQRNGTDMKLLAERGVQVFFTQVFRDSFFHADMHPGNIFVNPHYPENPQYIGIDCGIVGKLNESDKRYLAESFVAFFNRDYRRVAQMHVDAGWTPQDTNIDDFEQAFREVCEPIFAKPLSEISFAQVLLNLFNVAREFNMQVQPQLVLLQKTLLYIEGLGRQLYPQLDLWDTAKPFLQNWLNEQIGMKVTFKKLKAKLPYLQEHLPDFPETLMDALKQQKFISQQLVEINKKLAKQQRWQKKMFVLIVGIVIFSVTLWQFAALPLAISAGLFLVGFLVWLIGFLLP.

In terms of domain architecture, Protein kinase spans 123–504 (DFDENALASA…QRWQKKMFVL (382 aa)). ATP contacts are provided by residues 129–137 (LASASIAQV) and lysine 155. The active-site Proton acceptor is the aspartate 290. Helical transmembrane passes span 501–521 (MFVL…FAAL) and 523–543 (LAIS…GFLL).

Belongs to the ABC1 family. UbiB subfamily.

It localises to the cell inner membrane. It functions in the pathway cofactor biosynthesis; ubiquinone biosynthesis [regulation]. Its function is as follows. Is probably a protein kinase regulator of UbiI activity which is involved in aerobic coenzyme Q (ubiquinone) biosynthesis. This chain is Probable protein kinase UbiB, found in Histophilus somni (strain 129Pt) (Haemophilus somnus).